A 465-amino-acid chain; its full sequence is WASH complex subunit 1 (465 aa).

The tract at residues 1–54 is required for WASH complex assembly; sequence MTPVRMQHSLAGQTYAVPFIQPDLRREEAVQQMADALQYLQKVSGDIFSRISQQ. Residues 1 to 167 form a WHD1 region; the sequence is MTPVRMQHSL…EGLGGLPSNI (167 aa). A Glycyl lysine isopeptide (Lys-Gly) (interchain with G-Cter in ubiquitin) cross-link involves residue lysine 220. 3 disordered regions span residues 297–359, 376–407, and 423–465; these read QDGV…VDPS, GKAK…QGGH, and ISGK…DWES. Over residues 302-314 the composition is skewed to pro residues; sequence TPPPPPPPPPPAP. The tract at residues 349 to 465 is VCA; sequence QGAPREVVDP…AEEDEDDWES (117 aa). The WH2 domain occupies 361–383; sequence GWATLLESIRQAGGIGKAKLRSM. The span at 382-398 shows a compositional bias: basic and acidic residues; it reads SMKERKLEKQQQKEQEQ. Residues 424–436 show a composition bias toward gly residues; that stretch reads SGKGPGAGEGPGG. A compositionally biased stretch (acidic residues) spans 456 to 465; the sequence is AEEDEDDWES.

It belongs to the WASH1 family. As to quaternary structure, component of the WASH core complex also described as WASH regulatory complex (SHRC) composed of WASH (WASHC1, WASH2P or WASH3P), WASHC2 (WASHC2A or WASHC2C), WASHC3, WASHC4 and WASHC5. The WASH core complex associates via WASHC2 with the F-actin-capping protein dimer (formed by CAPZA1, CAPZA2 or CAPZA3 and CAPZB) in a transient or substoichiometric manner which was initially described as WASH complex. Interacts (via WHD1 region) with WASHC2C; the interaction is direct. Interacts with VPS35; mediates the association with the retromer CSC complex. Interacts with FKBP15. Interacts with alpha-tubulin. Interacts with BECN1; this interaction can be competed out by AMBRA1 binding. Interacts with BLOC1S2; may associate with the BLOC-1 complex. Interacts with tubulin gamma chain (TUBG1 or TUBG2). Interacts with EXOC1, EXOC4, EXOC8; in MMP14-positive endosomes in breast tumor cells; indicative for an association with the exocyst complex. Interacts with TBC1D23. Ubiquitinated at Lys-220 via 'Lys-63'-linked ubiquitin chains by the TRIM27:MAGEL2 E3 ubiquitin ligase complex, leading to promote endosomal F-actin assembly.

It is found in the early endosome membrane. It localises to the recycling endosome membrane. The protein localises to the late endosome. Its subcellular location is the cytoplasmic vesicle. The protein resides in the autophagosome. It is found in the cytoplasm. It localises to the cytoskeleton. The protein localises to the microtubule organizing center. Its subcellular location is the centrosome. The protein resides in the centriole. Its function is as follows. Acts as a component of the WASH core complex that functions as a nucleation-promoting factor (NPF) at the surface of endosomes, where it recruits and activates the Arp2/3 complex to induce actin polymerization, playing a key role in the fission of tubules that serve as transport intermediates during endosome sorting. Involved in endocytic trafficking of EGF. Involved in transferrin receptor recycling. Regulates the trafficking of endosomal alpha5beta1 integrin to the plasma membrane and involved in invasive cell migration. In T-cells involved in endosome-to-membrane recycling of receptors including T-cell receptor (TCR), CD28 and ITGAL; proposed to be implicated in T cell proliferation and effector function. In dendritic cells involved in endosome-to-membrane recycling of major histocompatibility complex (MHC) class II probably involving retromer and subsequently allowing antigen sampling, loading and presentation during T-cell activation. Involved in Arp2/3 complex-dependent actin assembly driving Salmonella typhimurium invasion independent of ruffling. Involved in the exocytosis of MMP14 leading to matrix remodeling during invasive migration and implicating late endosome-to-plasma membrane tubular connections and cooperation with the exocyst complex. Involved in negative regulation of autophagy independently from its role in endosomal sorting by inhibiting BECN1 ubiquitination to inactivate PIK3C3/Vps34 activity. This Homo sapiens (Human) protein is WASH complex subunit 1.